Here is a 325-residue protein sequence, read N- to C-terminus: Acetyl-coenzyme A carboxylase carboxyl transferase subunit alpha (325 aa).

Residues E43–Q297 enclose the CoA carboxyltransferase C-terminal domain.

This sequence belongs to the AccA family. In terms of assembly, acetyl-CoA carboxylase is a heterohexamer composed of biotin carboxyl carrier protein (AccB), biotin carboxylase (AccC) and two subunits each of ACCase subunit alpha (AccA) and ACCase subunit beta (AccD).

The protein localises to the cytoplasm. It carries out the reaction N(6)-carboxybiotinyl-L-lysyl-[protein] + acetyl-CoA = N(6)-biotinyl-L-lysyl-[protein] + malonyl-CoA. Its pathway is lipid metabolism; malonyl-CoA biosynthesis; malonyl-CoA from acetyl-CoA: step 1/1. Component of the acetyl coenzyme A carboxylase (ACC) complex. First, biotin carboxylase catalyzes the carboxylation of biotin on its carrier protein (BCCP) and then the CO(2) group is transferred by the carboxyltransferase to acetyl-CoA to form malonyl-CoA. The protein is Acetyl-coenzyme A carboxylase carboxyl transferase subunit alpha of Cyanothece sp. (strain PCC 7425 / ATCC 29141).